Consider the following 198-residue polypeptide: ATP-dependent Clp protease proteolytic subunit (198 aa).

Catalysis depends on serine 98, which acts as the Nucleophile. The active site involves histidine 123.

It belongs to the peptidase S14 family. Fourteen ClpP subunits assemble into 2 heptameric rings which stack back to back to give a disk-like structure with a central cavity, resembling the structure of eukaryotic proteasomes.

Its subcellular location is the cytoplasm. The enzyme catalyses Hydrolysis of proteins to small peptides in the presence of ATP and magnesium. alpha-casein is the usual test substrate. In the absence of ATP, only oligopeptides shorter than five residues are hydrolyzed (such as succinyl-Leu-Tyr-|-NHMec, and Leu-Tyr-Leu-|-Tyr-Trp, in which cleavage of the -Tyr-|-Leu- and -Tyr-|-Trp bonds also occurs).. Functionally, cleaves peptides in various proteins in a process that requires ATP hydrolysis. Has a chymotrypsin-like activity. Plays a major role in the degradation of misfolded proteins. The protein is ATP-dependent Clp protease proteolytic subunit of Listeria monocytogenes serovar 1/2a (strain ATCC BAA-679 / EGD-e).